Here is a 122-residue protein sequence, read N- to C-terminus: Large ribosomal subunit protein uL14 (122 aa).

This sequence belongs to the universal ribosomal protein uL14 family. In terms of assembly, part of the 50S ribosomal subunit. Forms a cluster with proteins L3 and L19. In the 70S ribosome, L14 and L19 interact and together make contacts with the 16S rRNA in bridges B5 and B8.

Functionally, binds to 23S rRNA. Forms part of two intersubunit bridges in the 70S ribosome. This chain is Large ribosomal subunit protein uL14, found in Corynebacterium diphtheriae (strain ATCC 700971 / NCTC 13129 / Biotype gravis).